Consider the following 607-residue polypeptide: Transporter aclS (607 aa).

12 consecutive transmembrane segments (helical) span residues 67–87, 91–111, 152–172, 192–212, 221–241, 262–282, 317–337, 364–384, 423–443, 445–465, 500–520, and 531–551; these read LGGS…AVVL, IAAI…IGFP, LTVV…TAIL, VTTQ…PVLY, LMIG…IWSL, SLGF…SIAL, VFGQ…FGCL, AAAV…NVVD, GCYV…LASA, TFVS…GIHI, GVLP…HSIN, and HLYA…HTLV. The interval 583–607 is disordered; the sequence is NKDSTEEDSDRSLRRESREVVETKV. Basic and acidic residues predominate over residues 592–607; sequence DRSLRRESREVVETKV.

Belongs to the purine-cytosine permease (2.A.39) family.

Its subcellular location is the membrane. Its function is as follows. Transporter; part of the gene cluster that mediates the biosynthesis of aspirochlorine (or antibiotic A30641), an unusual halogenated spiro compound with distinctive antifungal properties due to selective inhibition of protein biosynthesis, and which is also active against bacteria, viruses, and murine tumor cells. The polypeptide is Transporter aclS (Aspergillus oryzae (strain ATCC 42149 / RIB 40) (Yellow koji mold)).